The sequence spans 490 residues: V-type proton ATPase subunit B (490 aa).

Position 380 (Arg-380) interacts with ATP.

It belongs to the ATPase alpha/beta chains family. V-ATPase is a heteromultimeric enzyme made up of two complexes: the ATP-hydrolytic V1 complex and the proton translocation V0 complex. The V1 complex consists of three catalytic AB heterodimers that form a heterohexamer, three peripheral stalks each consisting of EG heterodimers, one central rotor including subunits D and F, and the regulatory subunits C and H. The proton translocation complex V0 consists of the proton transport subunit a, a ring of proteolipid subunits c9c'', rotary subunit d, subunits e and f, and the accessory subunits VhaAC45 and ATP6AP2. As to expression, expressed in Malpighian tubules, rectum, antennal palps and oviduct.

In terms of biological role, non-catalytic subunit of the V1 complex of vacuolar(H+)-ATPase (V-ATPase), a multisubunit enzyme composed of a peripheral complex (V1) that hydrolyzes ATP and a membrane integral complex (V0) that translocates protons. V-ATPase is responsible for acidifying and maintaining the pH of intracellular compartments and in some cell types, is targeted to the plasma membrane, where it is responsible for acidifying the extracellular environment. Essential for the proper assembly and activity of V-ATPase. The chain is V-type proton ATPase subunit B (Vha55) from Drosophila melanogaster (Fruit fly).